A 193-amino-acid chain; its full sequence is Serine recombinase gin (193 aa).

A Resolvase/invertase-type recombinase catalytic domain is found at 1 to 134; that stretch reads MLIGYVRVST…AGLAAARNKG (134 aa). The active-site O-(5'-phospho-DNA)-serine intermediate is Ser-9. The H-T-H motif DNA-binding region spans 138–183; that stretch reads GRPPKLTKAEWEQAGRLLAQGIPRKQVALIYDVALSTLYKKHPAKR.

It belongs to the site-specific recombinase resolvase family. In terms of assembly, homodimer. During inversion, two dimers associate to form a homotetramer.

The protein resides in the host cytoplasm. Functionally, performs inversion of a viral 3 kp segment (G-segment) that encodes two alternate pairs of tail fiber proteins thereby modifying the host specificity of the virus. Binds as a dimer to the viral gix sites which are 34-bp palindromic sequences that flank the invertible G-segment. Catalyzes site-specific recombination in the presence of the host factor Fis. Gin dimers bound to each of the gix sites and host factor Fis bound to the enhancer come together to form the synaptic complex. Each Gin monomer introduces a nick and becomes covalently attached to the 5'-phosphate of the DNA, resulting in double-stranded staggered breaks at both recombination sites. A 180 degrees rotation of one of the two Gin dimers followed by religation of the DNA leads to the inversion of the G-segment (G+ or G- orientation). In Escherichia phage Mu (Bacteriophage Mu), this protein is Serine recombinase gin (gin).